The sequence spans 380 residues: Protein Wnt-5a (380 aa).

Residues 1–35 (MKKSIGILSPGVALGTAGSAMSSKFFVMALAVFFS) form the signal peptide. Residues 36–61 (FAQVVIEANSWWSLGMNNPVQMSEVY) constitute a propeptide that is removed on maturation. Cysteine 104 and cysteine 115 form a disulfide bridge. Asparagine 114 and asparagine 120 each carry an N-linked (GlcNAc...) asparagine glycan. Disulfide bonds link cysteine 154-cysteine 162, cysteine 164-cysteine 182, cysteine 238-cysteine 252, cysteine 240-cysteine 247, cysteine 309-cysteine 340, cysteine 325-cysteine 335, cysteine 339-cysteine 379, cysteine 355-cysteine 370, cysteine 357-cysteine 367, and cysteine 362-cysteine 363. Serine 244 is lipidated: O-palmitoleoyl serine; by PORCN. N-linked (GlcNAc...) asparagine glycans are attached at residues asparagine 312 and asparagine 326.

It belongs to the Wnt family. In terms of assembly, forms a soluble 1:1 complex with AFM; this prevents oligomerization and is required for prolonged biological activity. The complex with AFM may represent the physiological form in body fluids. Homooligomer; disulfide-linked, leading to inactivation (in vitro). Interacts with PORCN. Interacts with WLS. Interacts with glypican GCP3. Interacts with PKD1 (via extracellular domain). Interacts with TMEM67. In terms of processing, glycosylation is necessary for secretion but not for activity. Palmitoleoylation is required for efficient binding to frizzled receptors. Depalmitoleoylation leads to Wnt signaling pathway inhibition. Post-translationally, proteolytic processing by TIKI1 and TIKI2 promotes oxidation and formation of large disulfide-bond oligomers, leading to inactivation of WNT5A.

Its subcellular location is the secreted. The protein localises to the extracellular space. The protein resides in the extracellular matrix. Its function is as follows. Ligand for members of the frizzled family of seven transmembrane receptors. Can activate or inhibit canonical Wnt signaling, depending on receptor context. In the presence of FZD4, activates beta-catenin signaling. In the presence of ROR2, inhibits the canonical Wnt pathway by promoting beta-catenin degradation through a GSK3-independent pathway which involves down-regulation of beta-catenin-induced reporter gene expression. Suppression of the canonical pathway allows chondrogenesis to occur. Inhibits tumor formation. Stimulates cell migration. Decreases proliferation, migration, invasiveness and clonogenicity of carcinoma cells and may act as a tumor suppressor. Mediates motility of melanoma cells. Required during embryogenesis for extension of the primary anterior-posterior axis and for outgrowth of limbs and the genital tubercle. Inhibits type II collagen expression in chondrocytes. This is Protein Wnt-5a from Oryctolagus cuniculus (Rabbit).